We begin with the raw amino-acid sequence, 250 residues long: MSITAVIPARYASSRFPGKPLARILGKTMIQRVYERTAQAACIDRVVVATDDSRIADVVSGFGGEVQMTRADHATGTDRLAEVTARIDTQLIVNVQGDEPLIDPHMIEAAVAPLSEDPAIPMGTLKTPLLNWQEYRDPNVVKVVTDRRGFALYFSRAPIPHPRELAVDDSAVSPASMGLFRHIGLYVYRKDFLLTFAGLPESPLERLEKLEQLRALENGYAIRVVETDRVSLGVDTPEDLVRVEAHLRGL.

This sequence belongs to the KdsB family.

The protein resides in the cytoplasm. It carries out the reaction 3-deoxy-alpha-D-manno-oct-2-ulosonate + CTP = CMP-3-deoxy-beta-D-manno-octulosonate + diphosphate. It participates in nucleotide-sugar biosynthesis; CMP-3-deoxy-D-manno-octulosonate biosynthesis; CMP-3-deoxy-D-manno-octulosonate from 3-deoxy-D-manno-octulosonate and CTP: step 1/1. Its pathway is bacterial outer membrane biogenesis; lipopolysaccharide biosynthesis. Functionally, activates KDO (a required 8-carbon sugar) for incorporation into bacterial lipopolysaccharide in Gram-negative bacteria. In Syntrophotalea carbinolica (strain DSM 2380 / NBRC 103641 / GraBd1) (Pelobacter carbinolicus), this protein is 3-deoxy-manno-octulosonate cytidylyltransferase.